The sequence spans 274 residues: NH(3)-dependent NAD(+) synthetase (274 aa).

46–53 (GISGGQDS) serves as a coordination point for ATP. Asp52 serves as a coordination point for Mg(2+). Arg140 contributes to the deamido-NAD(+) binding site. Thr160 contacts ATP. Residue Glu165 coordinates Mg(2+). Positions 173 and 180 each coordinate deamido-NAD(+). 2 residues coordinate ATP: Lys189 and Thr211. 260–261 (HK) is a binding site for deamido-NAD(+).

The protein belongs to the NAD synthetase family. As to quaternary structure, homodimer.

The catalysed reaction is deamido-NAD(+) + NH4(+) + ATP = AMP + diphosphate + NAD(+) + H(+). It functions in the pathway cofactor biosynthesis; NAD(+) biosynthesis; NAD(+) from deamido-NAD(+) (ammonia route): step 1/1. Its function is as follows. Catalyzes the ATP-dependent amidation of deamido-NAD to form NAD. Uses ammonia as a nitrogen source. In Lactococcus lactis subsp. lactis (strain IL1403) (Streptococcus lactis), this protein is NH(3)-dependent NAD(+) synthetase.